The sequence spans 2214 residues: Sortilin-related receptor (2214 aa).

An N-terminal signal peptide occupies residues 1 to 28 (MATRSSRRESRLPFLFTLVALLPPGALC). Positions 29 to 81 (EVWTQRLHGGSAPLPQDRGFLVVQGDPRELRLWARGDARGASRADEKPLRRKR) are cleaved as a propeptide — removed in mature form. The Cell attachment site motif lies at 63–65 (RGD). The Lumenal segment spans residues 82 to 2137 (SAALQPEPIK…TQAARSTDVA (2056 aa)). Asn99 is a glycosylation site (N-linked (GlcNAc...) asparagine). Ser114 carries the phosphoserine modification. The BNR 1 repeat unit spans residues 136–147 (YVSYDYGKSFKK). Asn158 carries N-linked (GlcNAc...) asparagine glycosylation. Residues 232-243 (WKSDDFGQTWIM) form a BNR 2 repeat. N-linked (GlcNAc...) asparagine glycans are attached at residues Asn368 and Asn430. 3 BNR repeats span residues 441–452 (VITFDKGGTWEF), 521–532 (YISSSAGARWRE), and 562–573 (KYSTNEGETWKT). N-linked (GlcNAc...) asparagine glycosylation is found at Asn616, Asn674, Asn818, and Asn871. LDL-receptor class B repeat units follow at residues 800–843 (NCLY…EPLS), 844–887 (QLLY…VPQE), 888–932 (GVMF…DDQW), 933–970 (IYWT…AVFK), and 971–1013 (NEIY…FYKG). An EGF-like domain is found at 1026 to 1072 (CSLLCLPKANNSRSCRCPEDVSSSVLPSGDLMCDCPQGYQLKNNTCV). Asn1035 and Asn1068 each carry an N-linked (GlcNAc...) asparagine glycan. LDL-receptor class A domains are found at residues 1076–1114 (NTCL…NCPT), 1115–1155 (TICD…HCEM), 1156–1194 (HQCR…NCTA), 1198–1236 (TCEA…VNCE), 1238–1272 (KCNG…QHCE), 1273–1317 (PLCT…GCSQ), 1323–1361 (KVCD…NCEN), 1366–1405 (PNCS…DCGD), and 1417–1455 (STCL…ACPL). Disulfide bonds link Cys1078–Cys1090, Cys1085–Cys1103, Cys1097–Cys1112, Cys1117–Cys1131, Cys1125–Cys1144, Cys1138–Cys1153, Cys1158–Cys1170, Cys1165–Cys1183, Cys1177–Cys1192, Cys1199–Cys1211, Cys1206–Cys1224, Cys1218–Cys1235, Cys1239–Cys1249, Cys1244–Cys1262, Cys1256–Cys1271, Cys1275–Cys1289, Cys1283–Cys1302, Cys1296–Cys1315, Cys1325–Cys1337, Cys1332–Cys1350, and Cys1344–Cys1359. N-linked (GlcNAc...) asparagine glycosylation is present at Asn1164. Residue Asn1191 is glycosylated (N-linked (GlcNAc...) asparagine). An N-linked (GlcNAc...) asparagine glycan is attached at Asn1246. An N-linked (GlcNAc...) asparagine glycan is attached at Asn1367. 6 disulfides stabilise this stretch: Cys1368–Cys1381, Cys1376–Cys1394, Cys1388–Cys1403, Cys1419–Cys1431, Cys1426–Cys1444, and Cys1438–Cys1453. Asn1458 carries an N-linked (GlcNAc...) asparagine glycan. 2 LDL-receptor class A domains span residues 1469 to 1508 (GRCD…NCPT) and 1512 to 1551 (LTCM…ACSD). 6 cysteine pairs are disulfide-bonded: Cys1471-Cys1484, Cys1478-Cys1497, Cys1491-Cys1506, Cys1514-Cys1527, Cys1521-Cys1540, and Cys1534-Cys1549. Fibronectin type-III domains are found at residues 1557 to 1649 (KVQN…TPEG), 1653 to 1745 (APRN…TIKG), 1749 to 1844 (PPPD…VRPP), 1843 to 1927 (PPAP…VVKM), 1934 to 2029 (PPRH…APDA), and 2030 to 2118 (LKII…LYDE). 12 N-linked (GlcNAc...) asparagine glycosylation sites follow: Asn1608, Asn1706, Asn1733, Asn1809, Asn1854, Asn1894, Asn1986, Asn2010, Asn2054, Asn2069, Asn2076, and Asn2092. Residues 2138–2158 (AVVVPILFLILLSLGVGFAIL) form a helical membrane-spanning segment. Residues 2159-2214 (YTKHRRLQSSFTAFANSHYSSRLGSAIFSSGDDLGEDDEDAPMITGFSDDVPMVIA) are Cytoplasmic-facing. A Potential nuclear localization signal for the C-terminal fragment generated by PSEN1 motif is present at residues 2161-2164 (KHRR). An Endocytosis signal motif is present at residues 2172-2177 (FANSHY). Positions 2190–2214 (DDLGEDDEDAPMITGFSDDVPMVIA) are required for efficient Golgi apparatus - endosome sorting. A required for interaction with GGA1 and GGA2 region spans residues 2201-2214 (MITGFSDDVPMVIA). Phosphoserine; by ROCK2 is present on Ser2206. Residues 2208-2212 (DVPMV) carry the DXXLL motif involved in the interaction with GGA1 motif.

This sequence belongs to the VPS10-related sortilin family. SORL1 subfamily. As to quaternary structure, after maturation cleavage, interacts (via N-terminus) with its own propeptide; this interaction prevents interaction with other ligands, including CRLF1, GDNF, GFRA1, IL6 and IL6R. Interacts (via N-terminal ectodomain) with APP, forming a 1:1 stoichiometric complex, including with isoforms APP695, APP751 and APP770; this interaction retains APP in the trans-Golgi network and reduces processing into soluble APP-alpha and amyloid-beta peptides. Also interacts with APP C-terminal fragment C99 and with Abeta40. Interacts with beta-secretase BACE1/BACE; this interaction may affect BACE1-binding to APP and hence reduce BACE1-dependent APP cleavage. Interacts with LRPAP1/RAP. Interacts (via C-terminal cytosolic domain) with GGA1 and GGA2 (via N-terminal VHS domain). Interacts with PACS1. May interact (via the N-terminal ectodomain) with the morphogenetic neuropeptide, also called head activator or HA; this interaction is impaired in the presence of propeptide. Interacts with neurotensin/NTS. Interacts (via the N-terminal ectodomain) with PDGFB homodimer. Interacts (via N-terminal ectodomain) with the uPA receptor PLAUR; this interaction decreases PLAUR internalization. Interacts (via N-terminal ectodomain) with uPA/PLAU and PAI1/SERPINE1, either individually or in complex with each other, leading to endocytosis; this interaction is abolished in the presence of LRPAP1. Also interacts with the ternary complex composed of PLAUR-PLAU-PAI1. Also interacts with tPA/PLAT either alone or in complex with SERPINE1. Interacts (via C-terminus) with AP-1 and AP-2 complexes. Interacts with BMPR1A and BMPR1B. Interacts with lipoprotein lipase LPL; this interaction is optimal in slightly acidic conditions. Interacts (via N-terminal ectodomain) with GDNF (via propeptide) and GDNF receptor alpha-1/GFRA1, either individually or in complex with each other. The interaction with GDNF occurs mostly intracellularly. Also interacts with other GDNF receptor alpha family members, including GFRA2, GFRA3 and GFRA4. Interacts with the insulin receptor INSR; this interaction strongly increases the surface exposure of INSR. Interacts (via cytosolic C-terminus) with STK39/SPAK. Interacts (via N-terminal ectodomain) with the heterodimeric complex CRLF1-CLC; within this complex, the interaction is mediated predominantly by the CRLF1 moiety. Interacts with CNTFR, as well as with the tripartite signaling complex formed by CRLF1, CLC and CNTFR. Interacts (via N-terminal ectodomain) with IL6; this interaction leads to IL6 internalization and lysosomal degradation. Binding of SOLRL1 secreted N-terminal ectodomain to IL6 may increase IL6 trans signaling. Interacts with secreted IL6R; this interaction leads to IL6R internalization. Also interacts with transmembrane IL6R; this interaction does not affect IL6R subcellular location. Interacts with APOE. Interacts with apolipoprotein E-rich beta-VLDL. Interacts with APOA5; this interaction leads to APOA5 internalization and is abolished by heparin. Interaction with APOA5 results in enhanced binding to chylomicrons. Interacts with ROCK2. Interacts (via cytosolic C-terminus) with PPP3CB/calcineurin A beta. Interacts with NTRK2/TRKB; this interaction facilitates NTRK2 trafficking between synaptic plasma membranes, postsynaptic densities and cell soma, hence positively regulates BDNF signaling. Interacts (via cytosolic C-terminus) with HSPA12A in an ADP-dependent manner; this interaction affects SORL1 internalization and subcellular localization. Interacts (via N-terminal ectodomain) with ERBB2/HER2. In terms of processing, within the Golgi apparatus, the propeptide may be cleaved off by FURIN or a furin-like protease. After cleavage, the propeptide interacts with the mature protein N-terminus, preventing the association with other ligands. At the cell surface, partially subjected to proteolytic shedding that releases the ectodomain in the extracellular milieu. The shedding may be catalyzed by ADAM17/TACE. Following shedding, PSEN1/presenilin-1 cleaves the remaining transmembrane fragment and catalyzes the release of a C-terminal fragment in the cytosol and of a soluble N-terminal beta fragment in the extracellular milieu. The C-terminal cytosolic fragment localizes to the nucleus. Phosphorylation at Ser-2206 facilitates the interaction with GGA1. Highly expressed in brain (at protein level). Most abundant in the cerebellum, cerebral cortex and occipital pole; low levels in the putamen and thalamus. Expression is significantly reduced in the frontal cortex of patients suffering from Alzheimer disease. Also expressed in spinal cord, spleen, testis, prostate, ovary, thyroid and lymph nodes.

The protein localises to the golgi apparatus membrane. The protein resides in the golgi apparatus. Its subcellular location is the trans-Golgi network membrane. It localises to the endosome membrane. It is found in the early endosome membrane. The protein localises to the recycling endosome membrane. The protein resides in the endoplasmic reticulum membrane. Its subcellular location is the endosome. It localises to the multivesicular body membrane. It is found in the cell membrane. The protein localises to the cytoplasmic vesicle. The protein resides in the secretory vesicle membrane. Its subcellular location is the secreted. Functionally, sorting receptor that directs several proteins to their correct location within the cell. Along with AP-1 complex, involved Golgi apparatus - endosome sorting. Sorting receptor for APP, regulating its intracellular trafficking and processing into amyloidogenic-beta peptides. Retains APP in the trans-Golgi network, hence preventing its transit through late endosomes where amyloid beta peptides Abeta40 and Abeta42 are generated. May also sort newly produced amyloid-beta peptides to lysosomes for catabolism. Does not affect APP trafficking from the endoplasmic reticulum to Golgi compartments. Sorting receptor for the BDNF receptor NTRK2/TRKB that facilitates NTRK2 trafficking between synaptic plasma membranes, postsynaptic densities and cell soma, hence positively regulates BDNF signaling by controlling the intracellular location of its receptor. Sorting receptor for GDNF that promotes GDNF regulated, but not constitutive secretion. Sorting receptor for the GDNF-GFRA1 complex, directing it from the cell surface to endosomes. GDNF is then targeted to lysosomes and degraded, while its receptor GFRA1 recycles back to the cell membrane, resulting in a GDNF clearance pathway. The SORL1-GFRA1 complex further targets RET for endocytosis, but not for degradation, affecting GDNF-induced neurotrophic activities. Sorting receptor for ERBB2/HER2. Regulates ERBB2 subcellular distribution by promoting its recycling after internalization from endosomes back to the plasma membrane, hence stimulating phosphoinositide 3-kinase (PI3K)-dependent ERBB2 signaling. In ERBB2-dependent cancer cells, promotes cell proliferation. Sorting receptor for lipoprotein lipase LPL. Promotes LPL localization to endosomes and later to the lysosomes, leading to degradation of newly synthesized LPL. Potential sorting receptor for APOA5, inducing APOA5 internalization to early endosomes, then to late endosomes, wherefrom a portion is sent to lysosomes and degradation, another portion is sorted to the trans-Golgi network. Sorting receptor for the insulin receptor INSR. Promotes recycling of internalized INSR via the Golgi apparatus back to the cell surface, thereby preventing lysosomal INSR catabolism, increasing INSR cell surface expression and strengthening insulin signal reception in adipose tissue. Does not affect INSR internalization. Plays a role in renal ion homeostasis, controlling the phospho-regulation of SLC12A1/NKCC2 by STK39/SPAK kinase and PPP3CB/calcineurin A beta phosphatase, possibly through intracellular sorting of STK39 and PPP3CB. Stimulates, via the N-terminal ectodomain, the proliferation and migration of smooth muscle cells, possibly by increasing cell surface expression of the urokinase receptor uPAR/PLAUR. This may promote extracellular matrix proteolysis and hence facilitate cell migration. By acting on the migration of intimal smooth muscle cells, may accelerate intimal thickening following vascular injury. Promotes adhesion of monocytes. Stimulates proliferation and migration of monocytes/macrophages. Through its action on intimal smooth muscle cells and macrophages, may accelerate intimal thickening and macrophage foam cell formation in the process of atherosclerosis. Regulates hypoxia-enhanced adhesion of hematopoietic stem and progenitor cells to the bone marrow stromal cells via a PLAUR-mediated pathway. This function is mediated by the N-terminal ectodomain. Metabolic regulator, which functions to maintain the adequate balance between lipid storage and oxidation in response to changing environmental conditions, such as temperature and diet. The N-terminal ectodomain negatively regulates adipose tissue energy expenditure, acting through the inhibition the BMP/Smad pathway. May regulate signaling by the heterodimeric neurotrophic cytokine CLCF1-CRLF1 bound to the CNTFR receptor by promoting the endocytosis of the tripartite complex CLCF1-CRLF1-CNTFR and lysosomal degradation. May regulate IL6 signaling, decreasing cis signaling, possibly by interfering with IL6-binding to membrane-bound IL6R, while up-regulating trans signaling via soluble IL6R. The sequence is that of Sortilin-related receptor (SORL1) from Homo sapiens (Human).